A 694-amino-acid polypeptide reads, in one-letter code: Glycine--tRNA ligase beta subunit (694 aa).

This sequence belongs to the class-II aminoacyl-tRNA synthetase family. As to quaternary structure, tetramer of two alpha and two beta subunits.

The protein resides in the cytoplasm. It catalyses the reaction tRNA(Gly) + glycine + ATP = glycyl-tRNA(Gly) + AMP + diphosphate. This is Glycine--tRNA ligase beta subunit from Acidithiobacillus ferrooxidans (strain ATCC 23270 / DSM 14882 / CIP 104768 / NCIMB 8455) (Ferrobacillus ferrooxidans (strain ATCC 23270)).